The sequence spans 222 residues: Coiled-coil domain-containing protein 43 homolog (222 aa).

Residues 80–111 (ETENKLKLTNLKLEQELKIKETTQSEINEEEK) are a coiled coil. Disordered regions lie at residues 102-126 (TQSE…EQKK) and 159-222 (EDNK…KRRL). 2 stretches are compositionally biased toward basic and acidic residues: residues 112 to 126 (YENP…EQKK) and 175 to 212 (RIAD…EEKK). A coiled-coil region spans residues 168-222 (GENLNAKRIADEEKAKREKSKIEHQKKVQRDKEALEKQKRDEEKKKTVKKEKRRL). The span at 213–222 (KTVKKEKRRL) shows a compositional bias: basic residues.

This sequence belongs to the CCDC43 family.

In Dictyostelium discoideum (Social amoeba), this protein is Coiled-coil domain-containing protein 43 homolog.